Here is a 300-residue protein sequence, read N- to C-terminus: Merozoite surface protein 2 (300 aa).

The first 20 residues, 1–20 (MKVIKTLSIINFFIFVTFNI), serve as a signal peptide directing secretion. Residues Asn-22 and Asn-36 are each glycosylated (N-linked (GlcNAc...) asparagine). The tract at residues 44 to 226 (EESKPPTGAV…EQTESPELQS (183 aa)) is polymorphic region. The stretch at 51–58 (GAVAGSGA) is one 1; inverted repeat. A 7 X 8 AA tandem repeats of G-S-G-A-G-A-V-A region spans residues 51–110 (GAVAGSGAGAGSGAGAVAGSGAGAVAGSGAGAVAGSGAGAVAGSGAGAVAGSGAVAGSGA). 5 consecutive repeat copies span residues 61-68 (GSGAGAVA), 69-76 (GSGAGAVA), 77-84 (GSGAGAVA), 85-92 (GSGAGAVA), and 93-100 (GSGAGAVA). The 7; inverted repeat unit spans residues 103-110 (GAVAGSGA). A disordered region spans residues 111 to 261 (GNGANPGADA…DSQKECTDGN (151 aa)). The segment covering 123-148 (SPSTPATTTTTTTTNDAEASTSTSSE) has biased composition (low complexity). The span at 149 to 165 (NRNHNNAETNPKGKGEV) shows a compositional bias: basic and acidic residues. 2 stretches are compositionally biased toward polar residues: residues 167–193 (KPNQ…NVPR) and 200–228 (KSPT…QSAP). N-linked (GlcNAc...) asparagine glycosylation is present at Asn-177. N-linked (GlcNAc...) asparagine glycosylation is present at Asn-249. Cysteines 257 and 265 form a disulfide. Asn-273 and Asn-274 each carry an N-linked (GlcNAc...) asparagine glycan. A lipid anchor (GPI-anchor amidated asparagine) is attached at Asn-274. A propeptide spans 275-300 (SSNIASINKFVVLISATLVLSFAIFI) (removed in mature form).

Its subcellular location is the cell membrane. Its function is as follows. May play a role in the merozoite attachment to the erythrocyte. In Plasmodium falciparum (isolate imr143), this protein is Merozoite surface protein 2.